The sequence spans 224 residues: Ribonuclease HII (224 aa).

Residues 1–219 (MMIAGIDEAG…VENIREELKK (219 aa)) enclose the RNase H type-2 domain. 3 residues coordinate a divalent metal cation: aspartate 7, glutamate 8, and aspartate 105.

The protein belongs to the RNase HII family. The cofactor is Mn(2+). Mg(2+) serves as cofactor.

It is found in the cytoplasm. It carries out the reaction Endonucleolytic cleavage to 5'-phosphomonoester.. In terms of biological role, endonuclease that specifically degrades the RNA of RNA-DNA hybrids. The chain is Ribonuclease HII from Methanosarcina barkeri (strain Fusaro / DSM 804).